A 728-amino-acid chain; its full sequence is Elongation factor 2 (728 aa).

Positions 19-261 (EHIRNIAIAA…MVCEHFPNPV (243 aa)) constitute a tr-type G domain. GTP contacts are provided by residues 28 to 35 (AHVDHGKT), 94 to 98 (DTPGH), and 148 to 151 (NKVD). Histidine 596 bears the Diphthamide mark.

The protein belongs to the TRAFAC class translation factor GTPase superfamily. Classic translation factor GTPase family. EF-G/EF-2 subfamily.

The protein resides in the cytoplasm. In terms of biological role, catalyzes the GTP-dependent ribosomal translocation step during translation elongation. During this step, the ribosome changes from the pre-translocational (PRE) to the post-translocational (POST) state as the newly formed A-site-bound peptidyl-tRNA and P-site-bound deacylated tRNA move to the P and E sites, respectively. Catalyzes the coordinated movement of the two tRNA molecules, the mRNA and conformational changes in the ribosome. The protein is Elongation factor 2 of Haloarcula marismortui (strain ATCC 43049 / DSM 3752 / JCM 8966 / VKM B-1809) (Halobacterium marismortui).